The primary structure comprises 67 residues: Preprofallaxidin-4 (67 aa).

An N-terminal signal peptide occupies residues 1–22; it reads MASLKKFLFLVLFLGMVSLSIC. The propeptide occupies 23–46; it reads DKEKREGENEEEEEEHEEESEEKR. The tract at residues 24 to 48 is disordered; it reads KEKREGENEEEEEEHEEESEEKRGL. Residues 30–42 are compositionally biased toward acidic residues; sequence ENEEEEEEHEEES.

Belongs to the frog skin active peptide (FSAP) family. Dermaseptin subfamily. As to expression, expressed by the skin glands.

The protein resides in the secreted. The chain is Preprofallaxidin-4 from Litoria fallax (Eastern dwarf tree frog).